We begin with the raw amino-acid sequence, 314 residues long: ATP synthase gamma chain (314 aa).

The protein belongs to the ATPase gamma chain family. F-type ATPases have 2 components, CF(1) - the catalytic core - and CF(0) - the membrane proton channel. CF(1) has five subunits: alpha(3), beta(3), gamma(1), delta(1), epsilon(1). CF(0) has three main subunits: a, b and c.

The protein resides in the cellular thylakoid membrane. Produces ATP from ADP in the presence of a proton gradient across the membrane. The gamma chain is believed to be important in regulating ATPase activity and the flow of protons through the CF(0) complex. The protein is ATP synthase gamma chain of Gloeothece citriformis (strain PCC 7424) (Cyanothece sp. (strain PCC 7424)).